A 95-amino-acid polypeptide reads, in one-letter code: Opiscorpine-4 (95 aa).

Residues 1–19 form the signal peptide; the sequence is MNNKLTALIFLGLLAIASC. In terms of domain architecture, BetaSPN-type CS-alpha/beta spans 55–95; it reads EFMCVANIDMTKSCDTHCQKASGEKGYCHGTKCKCGVPLSY. Cystine bridges form between C58–C82, C68–C87, and C72–C89.

Belongs to the long chain scorpion toxin family. Class 3 subfamily. As to expression, expressed by the venom gland.

The protein localises to the secreted. Has antimicrobial activity against yeasts and bacteria. This is Opiscorpine-4 from Opistophthalmus carinatus (African yellow leg scorpion).